A 37-amino-acid polypeptide reads, in one-letter code: Large ribosomal subunit protein bL36c (37 aa).

Belongs to the bacterial ribosomal protein bL36 family.

Its subcellular location is the plastid. The protein resides in the chloroplast. The chain is Large ribosomal subunit protein bL36c from Thalassiosira pseudonana (Marine diatom).